A 1235-amino-acid chain; its full sequence is Major DNA-binding protein (1235 aa).

A disordered region spans residues 536-584 (GGLDGKGDDGVPGGGAGGGGGRDVSGGPSDGLGGGRGGGGGGDSGGMMG). A compositionally biased stretch (gly residues) spans 545 to 584 (GVPGGGAGGGGGRDVSGGPSDGLGGGRGGGGGGDSGGMMG). The short motif at 846-847 (FW) is the Required for filament formation element. A compositionally biased stretch (gly residues) spans 1214–1226 (GVGGSSGGGGGSG). Residues 1214-1235 (GVGGSSGGGGGSGLLPAKRSRL) form a disordered region. Residues 1232–1235 (RSRL) are required for nuclear localization.

This sequence belongs to the herpesviridae major DNA-binding protein family. As to quaternary structure, homooligomers. Forms double-helical filaments necessary for the formation of replication compartments within the host nucleus. Interacts with the origin-binding protein. Interacts with the helicase primase complex; this interaction stimulates primer synthesis activity of the helicase-primase complex. Interacts with the DNA polymerase. Interacts with the alkaline exonuclease; this interaction increases its nuclease processivity.

The protein resides in the host nucleus. In terms of biological role, plays several crucial roles in viral infection. Participates in the opening of the viral DNA origin to initiate replication by interacting with the origin-binding protein. May disrupt loops, hairpins and other secondary structures present on ssDNA to reduce and eliminate pausing of viral DNA polymerase at specific sites during elongation. Promotes viral DNA recombination by performing strand-transfer, characterized by the ability to transfer a DNA strand from a linear duplex to a complementary single-stranded DNA circle. Can also catalyze the renaturation of complementary single strands. Additionally, reorganizes the host cell nucleus, leading to the formation of prereplicative sites and replication compartments. This process is driven by the protein which can form double-helical filaments in the absence of DNA. The sequence is that of Major DNA-binding protein from Homo sapiens (Human).